Here is a 421-residue protein sequence, read N- to C-terminus: UDP-glucuronic acid decarboxylase 1 (421 aa).

Topologically, residues 1-19 (MVRTRIQRLLTGINRRMMK) are cytoplasmic. A helical transmembrane segment spans residues 20–40 (LLIALALIAYVASVWGNFVNM). Over 41 to 421 (SKSIQENGEQ…RVKKGRTRHN (381 aa)) the chain is Lumenal. Positions 99, 100, 101, 120, 121, 123, 124, 125, 145, and 146 each coordinate NAD(+). UDP-alpha-D-glucuronate-binding residues include Leu150 and Tyr151. The NAD(+) site is built by Leu160 and Ser162. Lys178 is a binding site for UDP-alpha-D-glucuronate. An NAD(+)-binding site is contributed by Thr179. 4 residues coordinate UDP-alpha-D-glucuronate: Asn186, Gly189, Lys192, and Arg193. NAD(+) contacts are provided by Ala201, Tyr232, and Lys236. The Proton acceptor role is filled by Tyr232. The UDP-alpha-D-glucuronate site is built by Tyr246, Gln249, and Glu250. Residues Thr262, His268, and Arg273 each coordinate NAD(+). N-linked (GlcNAc...) asparagine glycans are attached at residues Asn317 and Asn386. Residues 400-421 (ANNQYIPKPKPARVKKGRTRHN) form a disordered region. Over residues 409-421 (KPARVKKGRTRHN) the composition is skewed to basic residues.

Belongs to the NAD(P)-dependent epimerase/dehydratase family. UDP-glucuronic acid decarboxylase subfamily. As to quaternary structure, homodimer and homotetramer. Requires NAD(+) as cofactor.

It localises to the golgi apparatus. The protein localises to the golgi stack membrane. It carries out the reaction UDP-alpha-D-glucuronate + H(+) = UDP-alpha-D-xylose + CO2. Its pathway is nucleotide-sugar biosynthesis; UDP-alpha-D-xylose biosynthesis; UDP-alpha-D-xylose from UDP-alpha-D-glucuronate: step 1/1. In terms of biological role, catalyzes the NAD-dependent decarboxylation of UDP-glucuronic acid to UDP-xylose. Necessary for the biosynthesis of the core tetrasaccharide in glycosaminoglycan biosynthesis. This chain is UDP-glucuronic acid decarboxylase 1 (uxs1), found in Xenopus tropicalis (Western clawed frog).